Reading from the N-terminus, the 208-residue chain is Glutathione S-transferase 1 (208 aa).

The GST N-terminal domain maps to Met1–Asp80. Glutathione contacts are provided by residues Ser9, His50–Ile52, and Glu64–Arg66. Residues Cys86–Phe207 enclose the GST C-terminal domain.

It belongs to the GST superfamily. Theta family. As to quaternary structure, homodimer.

The catalysed reaction is RX + glutathione = an S-substituted glutathione + a halide anion + H(+). Conjugation of reduced glutathione to a wide number of exogenous and endogenous hydrophobic electrophiles. In Musca domestica (House fly), this protein is Glutathione S-transferase 1 (Gst1).